Here is a 429-residue protein sequence, read N- to C-terminus: Bifunctional protein GlmU (429 aa).

Residues Met-1–Lys-223 form a pyrophosphorylase region. UDP-N-acetyl-alpha-D-glucosamine is bound by residues Leu-8–Gly-11, Lys-22, and Gly-81–Thr-82. Residue Asp-102 participates in Mg(2+) binding. UDP-N-acetyl-alpha-D-glucosamine contacts are provided by Gly-135, Glu-149, Asn-164, and Asn-221. Asn-221 contacts Mg(2+). Positions Phe-224–Gln-244 are linker. The interval Gly-245 to Lys-429 is N-acetyltransferase. The UDP-N-acetyl-alpha-D-glucosamine site is built by Arg-308 and Lys-325. His-336 acts as the Proton acceptor in catalysis. Residues Tyr-339 and Asn-350 each coordinate UDP-N-acetyl-alpha-D-glucosamine. Residues Asn-359–Tyr-360, Ser-378, Ala-396, and Arg-413 contribute to the acetyl-CoA site.

In the N-terminal section; belongs to the N-acetylglucosamine-1-phosphate uridyltransferase family. This sequence in the C-terminal section; belongs to the transferase hexapeptide repeat family. Homotrimer. The cofactor is Mg(2+).

It localises to the cytoplasm. The enzyme catalyses alpha-D-glucosamine 1-phosphate + acetyl-CoA = N-acetyl-alpha-D-glucosamine 1-phosphate + CoA + H(+). The catalysed reaction is N-acetyl-alpha-D-glucosamine 1-phosphate + UTP + H(+) = UDP-N-acetyl-alpha-D-glucosamine + diphosphate. Its pathway is nucleotide-sugar biosynthesis; UDP-N-acetyl-alpha-D-glucosamine biosynthesis; N-acetyl-alpha-D-glucosamine 1-phosphate from alpha-D-glucosamine 6-phosphate (route II): step 2/2. It functions in the pathway nucleotide-sugar biosynthesis; UDP-N-acetyl-alpha-D-glucosamine biosynthesis; UDP-N-acetyl-alpha-D-glucosamine from N-acetyl-alpha-D-glucosamine 1-phosphate: step 1/1. It participates in bacterial outer membrane biogenesis; LPS lipid A biosynthesis. Its function is as follows. Catalyzes the last two sequential reactions in the de novo biosynthetic pathway for UDP-N-acetylglucosamine (UDP-GlcNAc). The C-terminal domain catalyzes the transfer of acetyl group from acetyl coenzyme A to glucosamine-1-phosphate (GlcN-1-P) to produce N-acetylglucosamine-1-phosphate (GlcNAc-1-P), which is converted into UDP-GlcNAc by the transfer of uridine 5-monophosphate (from uridine 5-triphosphate), a reaction catalyzed by the N-terminal domain. The polypeptide is Bifunctional protein GlmU (Campylobacter jejuni subsp. jejuni serotype O:6 (strain 81116 / NCTC 11828)).